Reading from the N-terminus, the 300-residue chain is Phosphoribosylaminoimidazole-succinocarboxamide synthase (300 aa).

This sequence belongs to the SAICAR synthetase family.

It carries out the reaction 5-amino-1-(5-phospho-D-ribosyl)imidazole-4-carboxylate + L-aspartate + ATP = (2S)-2-[5-amino-1-(5-phospho-beta-D-ribosyl)imidazole-4-carboxamido]succinate + ADP + phosphate + 2 H(+). Its pathway is purine metabolism; IMP biosynthesis via de novo pathway; 5-amino-1-(5-phospho-D-ribosyl)imidazole-4-carboxamide from 5-amino-1-(5-phospho-D-ribosyl)imidazole-4-carboxylate: step 1/2. The polypeptide is Phosphoribosylaminoimidazole-succinocarboxamide synthase (Methylibium petroleiphilum (strain ATCC BAA-1232 / LMG 22953 / PM1)).